The primary structure comprises 514 residues: G-protein coupled receptor Mth (514 aa).

The N-terminal stretch at methionine 1–alanine 24 is a signal peptide. The Extracellular portion of the chain corresponds to aspartate 25–glutamine 218. Intrachain disulfides connect cysteine 29–cysteine 83, cysteine 85–cysteine 90, cysteine 94–cysteine 188, cysteine 95–cysteine 106, and cysteine 150–cysteine 209. Asparagine 45 is a glycosylation site (N-linked (GlcNAc...) asparagine). N-linked (GlcNAc...) asparagine glycans are attached at residues asparagine 109, asparagine 123, asparagine 170, and asparagine 198. Residues threonine 219–valine 239 traverse the membrane as a helical segment. The Cytoplasmic portion of the chain corresponds to lysine 240–lysine 248. Residues cysteine 249 to tryptophan 269 traverse the membrane as a helical segment. Topologically, residues glutamine 270 to proline 278 are extracellular. A helical transmembrane segment spans residues alanine 279–leucine 299. The Cytoplasmic segment spans residues histidine 300–arginine 320. A helical membrane pass occupies residues phenylalanine 321–leucine 341. The Extracellular segment spans residues alanine 342–alanine 370. Residues methionine 371–leucine 391 form a helical membrane-spanning segment. Over threonine 392–threonine 424 the chain is Cytoplasmic. The helical transmembrane segment at phenylalanine 425–phenylalanine 445 threads the bilayer. The Extracellular segment spans residues serine 446–asparagine 454. Asparagine 449 is a glycosylation site (N-linked (GlcNAc...) asparagine). A helical transmembrane segment spans residues valine 455–valine 475. Residues leucine 476–leucine 514 lie on the Cytoplasmic side of the membrane.

The protein belongs to the G-protein coupled receptor 2 family. Mth subfamily. Homodimer.

The protein localises to the cell membrane. Functionally, involved in biological aging and stress response. Essential for adult survival. Required in the presynaptic motor neuron to up-regulate neurotransmitter exocytosis at larval glutamatergic neuromuscular junctions (NMJs). Regulates a step associated with docking and clustering of vesicles at release sites. SP/Acp70A and sun are agonists that activate mth in vitro. The sequence is that of G-protein coupled receptor Mth (mth) from Drosophila melanogaster (Fruit fly).